The sequence spans 541 residues: Zinc finger CCHC domain-containing protein 7 (541 aa).

A disordered region spans residues 111 to 144 (AEEKTQSPATSHSNKVAQKCKRNNKKPKPEERPG). Residues 116–126 (QSPATSHSNKV) are compositionally biased toward polar residues. Residues Lys-129, Lys-136, Lys-138, Lys-234, and Lys-249 each participate in a glycyl lysine isopeptide (Lys-Gly) (interchain with G-Cter in SUMO2) cross-link. 3 consecutive CCHC-type zinc fingers follow at residues 236–253 (VTCR…NCPL), 258–275 (RACC…GCPA), and 299–316 (KRCD…ACPE). Residue Lys-334 forms a Glycyl lysine isopeptide (Lys-Gly) (interchain with G-Cter in SUMO2) linkage. A CCHC-type 4 zinc finger spans residues 343–360 (VYCYNCAQKGHYGHECTE). The interval 394 to 541 (VKDLKKNGDF…KKKKPKPSGL (148 aa)) is disordered. Glycyl lysine isopeptide (Lys-Gly) (interchain with G-Cter in SUMO2) cross-links involve residues Lys-408 and Lys-431. The span at 418–434 (RRHHDMRKSRSPRKYRR) shows a compositional bias: basic residues. Over residues 435-452 (WPRENKETQKEKTRSREG) the composition is skewed to basic and acidic residues. Lys-473 participates in a covalent cross-link: Glycyl lysine isopeptide (Lys-Gly) (interchain with G-Cter in SUMO2). The span at 474 to 486 (PNASGCANNQKPS) shows a compositional bias: polar residues. A Phosphoserine modification is found at Ser-477. Glycyl lysine isopeptide (Lys-Gly) (interchain with G-Cter in SUMO2) cross-links involve residues Lys-484 and Lys-487. Positions 487-497 (KSLHHASHYHR) are enriched in basic residues. Composition is skewed to basic and acidic residues over residues 498–509 (LREERLLRESKR) and 517–527 (STEDGSHDDLF). Residue Lys-530 forms a Glycyl lysine isopeptide (Lys-Gly) (interchain with G-Cter in SUMO2) linkage. A compositionally biased stretch (basic residues) spans 530-541 (KQKKKKPKPSGL).

As to quaternary structure, component of a nucleolar TRAMP-like complex, an ATP-dependent exosome regulatory complex consisting of a helicase (MTREX), an oligadenylate polymerase (TENT4B or TENT4A), and a substrate specific RNA-binding factor (ZCCHC7 or ZCCHC8). Several TRAMP-like complexes exist with specific compositions and are associated with nuclear, or nucleolar RNA exosomes.

The protein localises to the nucleus. It is found in the nucleolus. This is Zinc finger CCHC domain-containing protein 7 (Zcchc7) from Mus musculus (Mouse).